Reading from the N-terminus, the 313-residue chain is Protoheme IX farnesyltransferase (313 aa).

The next 8 helical transmembrane spans lie at 32–52 (VMSL…GDFH), 53–73 (PVLA…AGAL), 120–140 (ILVN…YVVI), 153–173 (IVIG…AVTG), 180–200 (LLLF…LALF), 226–246 (ILLY…LGYF), 248–268 (AIYG…ALRV), and 284–304 (LFKF…LEVV).

It belongs to the UbiA prenyltransferase family. Protoheme IX farnesyltransferase subfamily.

Its subcellular location is the cell inner membrane. The catalysed reaction is heme b + (2E,6E)-farnesyl diphosphate + H2O = Fe(II)-heme o + diphosphate. The protein operates within porphyrin-containing compound metabolism; heme O biosynthesis; heme O from protoheme: step 1/1. In terms of biological role, converts heme B (protoheme IX) to heme O by substitution of the vinyl group on carbon 2 of heme B porphyrin ring with a hydroxyethyl farnesyl side group. The chain is Protoheme IX farnesyltransferase from Rhodopseudomonas palustris (strain HaA2).